We begin with the raw amino-acid sequence, 245 residues long: Polyhedrin (245 aa).

It belongs to the polyhedrin family.

In terms of biological role, major component of the virus occlusion bodies, which are large proteinaceous structures (polyhedra), that protect the virus from the outside environment for extended periods until they are ingested by insect larvae. The chain is Polyhedrin (PH) from Orgyia pseudotsugata multicapsid polyhedrosis virus (OpMNPV).